The primary structure comprises 729 residues: Receptor-like protein 2 (729 aa).

The first 44 residues, 1–44, serve as a signal peptide directing secretion; the sequence is MRSKAKGLVRPLITKPVQPLSSHMHLFLLCILFLSALFLTLSEA. Residues 45-82 are N-cap; that stretch reads VCNLQDRESLIWFSGNVSSSVSPLNWNLSIDCCSWEGI. The Extracellular portion of the chain corresponds to 45-707; sequence VCNLQDRESL…AKENDELNRT (663 aa). N-linked (GlcNAc...) asparagine glycans are attached at residues asparagine 60 and asparagine 71. LRR repeat units lie at residues 89-113, 114-137, 139-163, 168-193, 195-219, 220-244, 245-268, 269-292, 293-316, 317-340, 342-364, 365-389, 391-413, 414-437, 439-464, 468-492, 493-515, 516-540, 542-560, and 561-584; these read DSHVTVISLPSRGLSGTLASSVQNI, HRLSRLDLSYNRLSGPLPPGFFST, DQLMILNLSYNSFNGELPLEQAFGN, FFSIQTLDLSSNLLEGEILRSSVYLQ, TINLISFNVSNNSFTGPIPSFMCRS, SPQLSKLDFSYNDFSGHISQELGRC, LRLTVLQAGFNNLSGVIPSEIYNL, SELEQLFLPANQLTGKIDNNITRL, RKLTSLALYSNHLEGEIPMDIGNL, SSLRSLQLHINNINGTVPLSLANC, KLVKLNLRVNQLGGGLTELEFSQ, LQSLKVLDLGNNSFTGALPDKIFSC, SLTAIRFAGNKLTGEISPQVLEL, ESLSFMGLSDNKLTNITGALSILQ, CRKLSTLILAKNFYDETVPSKEDFLS, FPKLRIFGVGACRLRGEIPAWLINL, NKVEVMDLSMNRFVGSIPGWLGT, LPDLFYLDLSDNLLTGELPKELFQL, ALMSQKITENNYLELPIFL, and NPNNVTTNQQYNKLYSFPPTIYIR. Residues asparagine 145 and asparagine 163 are each glycosylated (N-linked (GlcNAc...) asparagine). Residues asparagine 202 and asparagine 205 are each glycosylated (N-linked (GlcNAc...) asparagine). N-linked (GlcNAc...) asparagine glycans are attached at residues asparagine 256, asparagine 267, asparagine 288, asparagine 315, asparagine 330, and asparagine 339. A glycan (N-linked (GlcNAc...) asparagine) is linked at asparagine 375. Asparagine 428 carries N-linked (GlcNAc...) asparagine glycosylation. 7 N-linked (GlcNAc...) asparagine glycosylation sites follow: asparagine 564, asparagine 587, asparagine 611, asparagine 622, asparagine 635, asparagine 657, and asparagine 705. LRR repeat units follow at residues 599–623, 624–647, and 649–672; these read LKVLHILELLGNNLSGSIPDELSNL, TNLERLDLSNNNLSGSIPWSLTNL, and FLSYFNVANNSLEGPIPSEGQFDT. Residues 690 to 707 are C-cap/acidic domain; it reads LTSCKPTRAKENDELNRT. The helical transmembrane segment at 708–728 threads the bilayer; the sequence is FLMGIAIGYFLSFVSILVVRA. A topological domain (cytoplasmic) is located at residue tryptophan 729.

Belongs to the RLP family.

The protein localises to the cell membrane. Its function is as follows. Involved in the perception of CLV3 and CLV3-like peptides, that act as extracellular signals regulating meristems maintenance. This Arabidopsis thaliana (Mouse-ear cress) protein is Receptor-like protein 2.